A 112-amino-acid chain; its full sequence is S-adenosylmethionine decarboxylase proenzyme (112 aa).

S62 functions as the Schiff-base intermediate with substrate; via pyruvic acid in the catalytic mechanism. The residue at position 62 (S62) is a Pyruvic acid (Ser); by autocatalysis. Catalysis depends on H67, which acts as the Proton acceptor; for processing activity. Catalysis depends on C82, which acts as the Proton donor; for catalytic activity.

It belongs to the prokaryotic AdoMetDC family. Type 1 subfamily. As to quaternary structure, heterotetramer of two alpha and two beta chains arranged as a dimer of alpha/beta heterodimers. Requires pyruvate as cofactor. Is synthesized initially as an inactive proenzyme. Formation of the active enzyme involves a self-maturation process in which the active site pyruvoyl group is generated from an internal serine residue via an autocatalytic post-translational modification. Two non-identical subunits are generated from the proenzyme in this reaction, and the pyruvate is formed at the N-terminus of the alpha chain, which is derived from the carboxyl end of the proenzyme. The post-translation cleavage follows an unusual pathway, termed non-hydrolytic serinolysis, in which the side chain hydroxyl group of the serine supplies its oxygen atom to form the C-terminus of the beta chain, while the remainder of the serine residue undergoes an oxidative deamination to produce ammonia and the pyruvoyl group blocking the N-terminus of the alpha chain.

It carries out the reaction S-adenosyl-L-methionine + H(+) = S-adenosyl 3-(methylsulfanyl)propylamine + CO2. The protein operates within amine and polyamine biosynthesis; S-adenosylmethioninamine biosynthesis; S-adenosylmethioninamine from S-adenosyl-L-methionine: step 1/1. Catalyzes the decarboxylation of S-adenosylmethionine to S-adenosylmethioninamine (dcAdoMet), the propylamine donor required for the synthesis of the polyamines spermine and spermidine from the diamine putrescine. The sequence is that of S-adenosylmethionine decarboxylase proenzyme from Archaeoglobus fulgidus (strain ATCC 49558 / DSM 4304 / JCM 9628 / NBRC 100126 / VC-16).